Here is a 1025-residue protein sequence, read N- to C-terminus: Kinesin-like protein KIN-14P (1025 aa).

2 disordered regions span residues 1-87 and 263-286; these read MNPM…MHHG and YSQIESQTKTEKSKWEEQKKNEEE. Over residues 15–28 the composition is skewed to low complexity; sequence STPRSPFSPFSPLS. The span at 29–41 shows a compositional bias: basic and acidic residues; sequence VDDRHRNHADTKT. Positions 42–53 are enriched in low complexity; sequence PRSPFSPFSPLS. Polar residues predominate over residues 65–75; that stretch reads KFQQALASSGQ. The stretch at 203–425 forms a coiled coil; sequence HEIATQQLRQ…REMEKKSESN (223 aa). Residues 270–286 are compositionally biased toward basic and acidic residues; the sequence is TKTEKSKWEEQKKNEEE. Positions 509–838 constitute a Kinesin motor domain; sequence NIRVFCRVRP…LKFAERVSGV (330 aa). ATP is bound at residue 593-600; that stretch reads GQTGSGKT. Residues 847 to 879 adopt a coiled-coil conformation; sequence KEGKDVRDLMEQLASLKDTIARKDEEIERLQHQ. Disordered regions lie at residues 881 to 926, 939 to 977, and 994 to 1025; these read QRLQ…SAEA, AASMGTQGSIDVTKRPPRISDRAKSVTAKSSTSVTRPLD, and TGLTSSSKGLASSSIKKTGSTSSLAKSSKRWA. Polar residues-rich tracts occupy residues 901–913 and 939–948; these read SDTGEYSSQSRYS and AASMGTQGSI. Basic and acidic residues predominate over residues 950–962; that stretch reads VTKRPPRISDRAK. 2 stretches are compositionally biased toward low complexity: residues 963-974 and 998-1016; these read SVTAKSSTSVTR and SSSKGLASSSIKKTGSTSS.

The protein belongs to the TRAFAC class myosin-kinesin ATPase superfamily. Kinesin family. KIN-14 subfamily.

The sequence is that of Kinesin-like protein KIN-14P from Arabidopsis thaliana (Mouse-ear cress).